A 294-amino-acid polypeptide reads, in one-letter code: Glyceraldehyde-3-phosphate dehydrogenase (294 aa).

NAD(+) is bound by residues D19, R63, and T105. Residues 134 to 136 (SCT), T165, 194 to 195 (TG), and R217 each bind D-glyceraldehyde 3-phosphate. The active-site Nucleophile is the C135.

The protein belongs to the glyceraldehyde-3-phosphate dehydrogenase family. In terms of assembly, homotetramer.

It localises to the cytoplasm. The enzyme catalyses D-glyceraldehyde 3-phosphate + phosphate + NAD(+) = (2R)-3-phospho-glyceroyl phosphate + NADH + H(+). It participates in carbohydrate degradation; glycolysis; pyruvate from D-glyceraldehyde 3-phosphate: step 1/5. Its function is as follows. Catalyzes the oxidative phosphorylation of glyceraldehyde 3-phosphate (G3P) to 1,3-bisphosphoglycerate (BPG) using the cofactor NAD. The first reaction step involves the formation of a hemiacetal intermediate between G3P and a cysteine residue, and this hemiacetal intermediate is then oxidized to a thioester, with concomitant reduction of NAD to NADH. The reduced NADH is then exchanged with the second NAD, and the thioester is attacked by a nucleophilic inorganic phosphate to produce BPG. The sequence is that of Glyceraldehyde-3-phosphate dehydrogenase (gap) from Shimwellia blattae (Escherichia blattae).